Here is a 349-residue protein sequence, read N- to C-terminus: Protein-glutamate methylesterase/protein-glutamine glutaminase (349 aa).

The Response regulatory domain maps to 5-122 (RVLCVDDSAL…REGMLAYSEL (118 aa)). Asp-56 carries the post-translational modification 4-aspartylphosphate. The region spanning 152–344 (LLSSEKLIAI…QRMLAQISSG (193 aa)) is the CheB-type methylesterase domain. Residues Ser-164, His-190, and Asp-286 contribute to the active site.

Belongs to the CheB family. Post-translationally, phosphorylated by CheA. Phosphorylation of the N-terminal regulatory domain activates the methylesterase activity.

The protein resides in the cytoplasm. The enzyme catalyses [protein]-L-glutamate 5-O-methyl ester + H2O = L-glutamyl-[protein] + methanol + H(+). It catalyses the reaction L-glutaminyl-[protein] + H2O = L-glutamyl-[protein] + NH4(+). Its function is as follows. Involved in chemotaxis. Part of a chemotaxis signal transduction system that modulates chemotaxis in response to various stimuli. Catalyzes the demethylation of specific methylglutamate residues introduced into the chemoreceptors (methyl-accepting chemotaxis proteins or MCP) by CheR. Also mediates the irreversible deamidation of specific glutamine residues to glutamic acid. The sequence is that of Protein-glutamate methylesterase/protein-glutamine glutaminase from Yersinia pestis bv. Antiqua (strain Antiqua).